The chain runs to 78 residues: Mambalgin-1 (78 aa).

The first 21 residues, 1–21, serve as a signal peptide directing secretion; it reads MKTLLLTLLVVTIVCLDLGYS. Intrachain disulfides connect C24/C40, C33/C58, C62/C70, and C71/C76.

Belongs to the three-finger toxin family. Short-chain subfamily. Mambalgin sub-subfamily. In terms of tissue distribution, expressed by the venom gland.

It is found in the secreted. Functionally, this three-finger toxin inhibits ASIC channels. It acts as a gating modifier toxin by decreasing the apparent proton sensitivity of activation and by slightly increasing the apparent proton sensitivity for inactivation. It binds more tightly to the closed state and to a much lesser extent the inactivated/desensitized state of ASIC1a isoform of ASIC1. It interacts directly with the outside surface of the thumb domain of chicken ASIC1a (ASIC1a), but does not insert into the acidic pocket as suggested for mambalgin-2. This binding leads to relocation of the thumb domain that could disrupt the acidic pocket of cASIC1a. It reversibly inhibits rat ASIC1a (IC(50)=3.4-55 nM), rat ASIC1a-ASIC2b (IC(50)=61 nM), rat ASIC1a-ASIC1b (IC(50)=72 nM), human ASIC1a (IC(50)=127-580 nM), chicken ASIC1a (IC(50)=123.6 nM), rat ASIC1b (IC(50)=22.2-203 nM), rat ASIC1a-ASIC2a (IC(50)=152-252 nM). In vivo, it shows a potent naloxone-resistant analgesic effect against acute and inflammatory pain upon central and peripheral injection. In addition, it also has an opioid-independent effect on both thermal and mechanical inflammatory pain after systemic administration and is effective against neuropathic pain. The polypeptide is Mambalgin-1 (Dendroaspis polylepis polylepis (Black mamba)).